The sequence spans 338 residues: Ornithine carbamoyltransferase (338 aa).

Carbamoyl phosphate contacts are provided by residues 56–59, Arg-107, and 134–137; these read STRT and HPTQ. L-ornithine is bound by residues Asn-168, Asp-232, and 236–237; that span reads SM. Carbamoyl phosphate is bound by residues 274-275 and Arg-320; that span reads CL.

Belongs to the aspartate/ornithine carbamoyltransferase superfamily. OTCase family.

The protein resides in the cytoplasm. The catalysed reaction is carbamoyl phosphate + L-ornithine = L-citrulline + phosphate + H(+). It participates in amino-acid biosynthesis; L-arginine biosynthesis; L-arginine from L-ornithine and carbamoyl phosphate: step 1/3. Its function is as follows. Reversibly catalyzes the transfer of the carbamoyl group from carbamoyl phosphate (CP) to the N(epsilon) atom of ornithine (ORN) to produce L-citrulline. This chain is Ornithine carbamoyltransferase (argI), found in Buchnera aphidicola subsp. Schizaphis graminum (strain Sg).